The sequence spans 472 residues: Sporozoite surface protein P36p (472 aa).

The first 23 residues, 1-23 (MMKRRRIFMYYCFCFLLKYVAFS), serve as a signal peptide directing secretion. Asn24, Asn29, Asn93, Asn112, and Asn185 each carry an N-linked (GlcNAc...) asparagine glycan. 2 consecutive 6-Cys domains span residues 24-157 (NVTN…FKKM) and 160-299 (KIKG…TSKN). 5 cysteine pairs are disulfide-bonded: Cys64–Cys138, Cys81–Cys136, Cys164–Cys188, Cys202–Cys281, and Cys222–Cys279. 6 N-linked (GlcNAc...) asparagine glycosylation sites follow: Asn295, Asn306, Asn383, Asn396, Asn400, and Asn416. Residues 359–385 (KMDPSDEDESNENAHNGNRANKDANYS) form a disordered region. Residue Ser449 is the site of GPI-anchor amidated serine attachment. Positions 450 to 472 (SSYYEVFNYFSIAFILIIHMLLW) are cleaved as a propeptide — removed in mature form.

It is found in the cell surface. The protein resides in the cell membrane. Its function is as follows. Involved in sporozoite infection of hepatocytes and replication therein. In Plasmodium berghei (strain Anka), this protein is Sporozoite surface protein P36p (P52).